The sequence spans 409 residues: Glycosaminoglycan xylosylkinase (409 aa).

The Cytoplasmic segment spans residues 1-6; the sequence is MKLKQR. The chain crosses the membrane as a helical; Signal-anchor for type II membrane protein span at residues 7 to 25; sequence VVVLCAVLFLLGLAKVFLL. The Lumenal segment spans residues 26–409; that stretch reads DGGEGSAASR…IEDRMNLPHP (384 aa). ATP-binding residues include glutamine 107 and lysine 123. Aspartate 142 serves as a coordination point for Mn(2+). Asparagine 193 is a glycosylation site (N-linked (GlcNAc...) asparagine). 2 disulfide bridges follow: cysteine 196–cysteine 211 and cysteine 201–cysteine 204. ATP is bound at residue 222 to 225; sequence TLWL. Intrachain disulfides connect cysteine 257-cysteine 331 and cysteine 332-cysteine 389. Aspartate 289 is a catalytic residue. Residues glutamate 294 and aspartate 309 each contribute to the ATP site. Aspartate 309 is a Mn(2+) binding site.

The protein belongs to the FAM20 family. Mn(2+) is required as a cofactor.

Its subcellular location is the golgi apparatus membrane. It catalyses the reaction 3-O-(beta-D-galactosyl-(1-&gt;3)-beta-D-galactosyl-(1-&gt;4)-beta-D-xylosyl)-L-seryl-[protein] + ATP = 3-O-(beta-D-galactosyl-(1-&gt;3)-beta-D-galactosyl-(1-&gt;4)-beta-D-2-O-phosphoxylosyl)-L-seryl-[protein] + ADP + H(+). Functionally, responsible for the 2-O-phosphorylation of xylose in the glycosaminoglycan-protein linkage region of proteoglycans thereby regulating the amount of mature GAG chains. Sulfated glycosaminoglycans (GAGs), including heparan sulfate and chondroitin sulfate, are synthesized on the so-called common GAG-protein linkage region (GlcUAbeta1-3Galbeta1-3Galbeta1-4Xylbeta1-O-Ser) of core proteins, which is formed by the stepwise addition of monosaccharide residues by the respective specific glycosyltransferases. This Danio rerio (Zebrafish) protein is Glycosaminoglycan xylosylkinase.